Here is a 218-residue protein sequence, read N- to C-terminus: dTTP/UTP pyrophosphatase (218 aa).

Asp-69 serves as the catalytic Proton acceptor.

It belongs to the Maf family. YhdE subfamily. A divalent metal cation is required as a cofactor.

The protein localises to the cytoplasm. The catalysed reaction is dTTP + H2O = dTMP + diphosphate + H(+). It catalyses the reaction UTP + H2O = UMP + diphosphate + H(+). Functionally, nucleoside triphosphate pyrophosphatase that hydrolyzes dTTP and UTP. May have a dual role in cell division arrest and in preventing the incorporation of modified nucleotides into cellular nucleic acids. The polypeptide is dTTP/UTP pyrophosphatase (Thermomicrobium roseum (strain ATCC 27502 / DSM 5159 / P-2)).